Consider the following 122-residue polypeptide: LOB domain-containing protein 5 (122 aa).

The LOB domain maps to 8–109 (RPCSVCITKN…AYLRELQEKI (102 aa)).

This sequence belongs to the LOB domain-containing protein family.

This Arabidopsis thaliana (Mouse-ear cress) protein is LOB domain-containing protein 5 (LBD5).